The chain runs to 132 residues: Small ribosomal subunit protein uS11 (132 aa).

Residues 108-132 (GRIEDVTPVPHDSCRPKGGRRGRRV) are disordered.

This sequence belongs to the universal ribosomal protein uS11 family. In terms of assembly, part of the 30S ribosomal subunit.

Located on the platform of the 30S subunit. The sequence is that of Small ribosomal subunit protein uS11 from Methanoregula boonei (strain DSM 21154 / JCM 14090 / 6A8).